The primary structure comprises 60 residues: Large ribosomal subunit protein bL32 (60 aa).

Basic residues predominate over residues 1–23 (MAKHPVPKKKTSKARRDARRSHH). The tract at residues 1–30 (MAKHPVPKKKTSKARRDARRSHHALTPPTL) is disordered.

As to quaternary structure, part of the 50S ribosomal subunit.

Its function is as follows. Found on the solvent side of the large subunit. The protein is Large ribosomal subunit protein bL32 (rpmF) of Thermus thermophilus (strain ATCC 27634 / DSM 579 / HB8).